We begin with the raw amino-acid sequence, 275 residues long: Replication protein A 32 kDa subunit (275 aa).

A disordered region spans residues 23–47 (MQSPGGFGSPAPTQGEKKSRSRSQQ). The OB DNA-binding region spans 76-150 (VTIVGIVRHA…KSVVAFKIAP (75 aa)).

It belongs to the replication factor A protein 2 family. Component of the replication protein A complex (RPA/RP-A), a heterotrimeric complex composed of RPA1, RPA2 and RPA3. Differentially phosphorylated throughout the cell cycle, becoming phosphorylated at the G1-S transition and dephosphorylated in late mitosis. Phosphorylation increases upon replication fork stalling.

It is found in the nucleus. The protein localises to the PML body. Its function is as follows. As part of the heterotrimeric replication protein A complex (RPA/RP-A), binds and stabilizes single-stranded DNA intermediates, that form during DNA replication or upon DNA stress. It prevents their reannealing and in parallel, recruits and activates different proteins and complexes involved in DNA metabolism. Thereby, it plays an essential role both in DNA replication and the cellular response to DNA damage. The chain is Replication protein A 32 kDa subunit (rpa2) from Xenopus tropicalis (Western clawed frog).